We begin with the raw amino-acid sequence, 344 residues long: Oxygen sensor histidine kinase NreB (344 aa).

The [4Fe-4S] cluster site is built by cysteine 58, cysteine 61, cysteine 73, and cysteine 76. Residues glutamate 147 to isoleucine 344 enclose the Histidine kinase domain. Histidine 158 is subject to Phosphohistidine; by autocatalysis.

[4Fe-4S] cluster serves as cofactor. Post-translationally, autophosphorylated.

Its subcellular location is the cytoplasm. It catalyses the reaction ATP + protein L-histidine = ADP + protein N-phospho-L-histidine.. Its function is as follows. Member of the two-component regulatory system NreB/NreC involved in the control of dissimilatory nitrate/nitrite reduction in response to oxygen. NreB functions as a direct oxygen sensor histidine kinase which is autophosphorylated, in the absence of oxygen, probably at the conserved histidine residue, and transfers its phosphate group probably to a conserved aspartate residue of NreC. NreB/NreC activates the expression of the nitrate (narGHJI) and nitrite (nir) reductase operons, as well as the putative nitrate transporter gene narT. This chain is Oxygen sensor histidine kinase NreB (nreB), found in Staphylococcus epidermidis (strain ATCC 35984 / DSM 28319 / BCRC 17069 / CCUG 31568 / BM 3577 / RP62A).